Here is a 189-residue protein sequence, read N- to C-terminus: GTP cyclohydrolase 1 (189 aa).

3 residues coordinate Zn(2+): Cys78, His81, and Cys150.

The protein belongs to the GTP cyclohydrolase I family. In terms of assembly, homomer.

The catalysed reaction is GTP + H2O = 7,8-dihydroneopterin 3'-triphosphate + formate + H(+). It participates in cofactor biosynthesis; 7,8-dihydroneopterin triphosphate biosynthesis; 7,8-dihydroneopterin triphosphate from GTP: step 1/1. The polypeptide is GTP cyclohydrolase 1 (Lysinibacillus sphaericus (strain C3-41)).